A 278-amino-acid polypeptide reads, in one-letter code: Octanoyl-[GcvH]:protein N-octanoyltransferase (278 aa).

The 207-residue stretch at 41-247 folds into the BPL/LPL catalytic domain; that stretch reads LVSPPTIRTW…LLHRLAGEVH (207 aa). Cys-146 acts as the Acyl-thioester intermediate in catalysis.

It belongs to the octanoyltransferase LipL family.

The enzyme catalyses N(6)-octanoyl-L-lysyl-[glycine-cleavage complex H protein] + L-lysyl-[lipoyl-carrier protein] = N(6)-octanoyl-L-lysyl-[lipoyl-carrier protein] + L-lysyl-[glycine-cleavage complex H protein]. Its pathway is protein modification; protein lipoylation via endogenous pathway; protein N(6)-(lipoyl)lysine from octanoyl-[acyl-carrier-protein]. Its function is as follows. Catalyzes the amidotransfer (transamidation) of the octanoyl moiety from octanoyl-GcvH to the lipoyl domain of the E2 subunit of lipoate-dependent enzymes. This Lysinibacillus sphaericus (strain C3-41) protein is Octanoyl-[GcvH]:protein N-octanoyltransferase.